Here is a 309-residue protein sequence, read N- to C-terminus: 2-phospho-L-lactate transferase (309 aa).

7,8-didemethyl-8-hydroxy-5-deazariboflavin contacts are provided by Asp50 and Lys89.

This sequence belongs to the CofD family. In terms of assembly, homodimer. It depends on Mg(2+) as a cofactor.

The catalysed reaction is (2S)-lactyl-2-diphospho-5'-guanosine + 7,8-didemethyl-8-hydroxy-5-deazariboflavin = oxidized coenzyme F420-0 + GMP + H(+). It participates in cofactor biosynthesis; coenzyme F420 biosynthesis. In terms of biological role, catalyzes the transfer of the 2-phospholactate moiety from (2S)-lactyl-2-diphospho-5'-guanosine to 7,8-didemethyl-8-hydroxy-5-deazariboflavin (FO) with the formation of oxidized coenzyme F420-0 and GMP. This chain is 2-phospho-L-lactate transferase, found in Methanococcus maripaludis (strain C5 / ATCC BAA-1333).